We begin with the raw amino-acid sequence, 262 residues long: Cyclin-dependent kinase inhibitor 1 (262 aa).

A disordered region spans residues 140–212 (SDVAEAGSEH…SAQQATRPKI (73 aa)). Positions 160-169 (SGRDRERRET) are enriched in basic and acidic residues. The segment covering 198 to 208 (SAATASAQQAT) has biased composition (low complexity).

This sequence belongs to the CDI family. ICK/KRP subfamily. Expressed in roots, stems, leaves and apex.

In terms of biological role, regulates the production of endosperm cells, affecting seed filling and embryo development. Regulates endoreduplication of endosperm cells. May play a role in the exit from the mitotic cell cycle during rice grain formation. Inhibitis leaf elongation rates by decreasing cell number, that is partly compensated by increased cell size. May not affect growth rate or cell size of the primary root. In Oryza sativa subsp. japonica (Rice), this protein is Cyclin-dependent kinase inhibitor 1 (KRP1).